The chain runs to 122 residues: Large ribosomal subunit protein bL12 (122 aa).

The protein belongs to the bacterial ribosomal protein bL12 family. In terms of assembly, homodimer. Part of the ribosomal stalk of the 50S ribosomal subunit. Forms a multimeric L10(L12)X complex, where L10 forms an elongated spine to which 2 to 4 L12 dimers bind in a sequential fashion. Binds GTP-bound translation factors.

Its function is as follows. Forms part of the ribosomal stalk which helps the ribosome interact with GTP-bound translation factors. Is thus essential for accurate translation. The sequence is that of Large ribosomal subunit protein bL12 from Cronobacter sakazakii (strain ATCC BAA-894) (Enterobacter sakazakii).